The primary structure comprises 479 residues: Aspartyl/glutamyl-tRNA(Asn/Gln) amidotransferase subunit B (479 aa).

This sequence belongs to the GatB/GatE family. GatB subfamily. In terms of assembly, heterotrimer of A, B and C subunits.

It catalyses the reaction L-glutamyl-tRNA(Gln) + L-glutamine + ATP + H2O = L-glutaminyl-tRNA(Gln) + L-glutamate + ADP + phosphate + H(+). The catalysed reaction is L-aspartyl-tRNA(Asn) + L-glutamine + ATP + H2O = L-asparaginyl-tRNA(Asn) + L-glutamate + ADP + phosphate + 2 H(+). Its function is as follows. Allows the formation of correctly charged Asn-tRNA(Asn) or Gln-tRNA(Gln) through the transamidation of misacylated Asp-tRNA(Asn) or Glu-tRNA(Gln) in organisms which lack either or both of asparaginyl-tRNA or glutaminyl-tRNA synthetases. The reaction takes place in the presence of glutamine and ATP through an activated phospho-Asp-tRNA(Asn) or phospho-Glu-tRNA(Gln). The sequence is that of Aspartyl/glutamyl-tRNA(Asn/Gln) amidotransferase subunit B from Mesoplasma florum (strain ATCC 33453 / NBRC 100688 / NCTC 11704 / L1) (Acholeplasma florum).